We begin with the raw amino-acid sequence, 202 residues long: S-modulin (202 aa).

Residue Gly2 is the site of N-myristoyl glycine attachment. 4 consecutive EF-hand domains span residues 25–60 (QEEL…FPDA), 61–96 (DPKA…TSSG), 97–132 (KANQ…IFKM), and 147–182 (TPEK…NKEI). Residues Asp74, Asn76, Asp78, Thr80, Glu85, Asp110, Asp112, Asn114, Thr116, and Glu121 each coordinate Ca(2+).

Belongs to the recoverin family. In terms of processing, the N-terminus is blocked.

Its function is as follows. Calcium-dependent regulator of light sensitivity of cGMP phosphodiesterase in rod outer segments. Controls rhodopsin phosphorylation in a Ca(2+)-dependent manner. The protein is S-modulin of Aquarana catesbeiana (American bullfrog).